A 357-amino-acid chain; its full sequence is sn-glycerol-3-phosphate import ATP-binding protein UgpC (357 aa).

Positions Leu-4 to Ile-235 constitute an ABC transporter domain. Residue Gly-37 to Ser-44 coordinates ATP.

This sequence belongs to the ABC transporter superfamily. sn-glycerol-3-phosphate importer (TC 3.A.1.1.3) family. The complex is composed of two ATP-binding proteins (UgpC), two transmembrane proteins (UgpA and UgpE) and a solute-binding protein (UgpB).

The protein resides in the cell inner membrane. The catalysed reaction is sn-glycerol 3-phosphate(out) + ATP + H2O = sn-glycerol 3-phosphate(in) + ADP + phosphate + H(+). In terms of biological role, part of the ABC transporter complex UgpBAEC involved in sn-glycerol-3-phosphate (G3P) import. Responsible for energy coupling to the transport system. The polypeptide is sn-glycerol-3-phosphate import ATP-binding protein UgpC (Yersinia pseudotuberculosis serotype I (strain IP32953)).